The chain runs to 85 residues: YcgL domain-containing protein PC1_1941 (85 aa).

The 85-residue stretch at 1-85 (MFCVIYRSAK…PVENLLNTPV (85 aa)) folds into the YcgL domain.

The polypeptide is YcgL domain-containing protein PC1_1941 (Pectobacterium carotovorum subsp. carotovorum (strain PC1)).